A 189-amino-acid chain; its full sequence is Elongation factor P (189 aa).

Lys-34 bears the N6-(3,6-diaminohexanoyl)-5-hydroxylysine mark.

This sequence belongs to the elongation factor P family. Post-translationally, may be beta-lysylated on the epsilon-amino group of Lys-34 by the combined action of EpmA and EpmB, and then hydroxylated on the C5 position of the same residue by EpmC (if this protein is present). Lysylation is critical for the stimulatory effect of EF-P on peptide-bond formation. The lysylation moiety may extend toward the peptidyltransferase center and stabilize the terminal 3-CCA end of the tRNA. Hydroxylation of the C5 position on Lys-34 may allow additional potential stabilizing hydrogen-bond interactions with the P-tRNA.

The protein localises to the cytoplasm. The protein operates within protein biosynthesis; polypeptide chain elongation. Functionally, involved in peptide bond synthesis. Alleviates ribosome stalling that occurs when 3 or more consecutive Pro residues or the sequence PPG is present in a protein, possibly by augmenting the peptidyl transferase activity of the ribosome. Modification of Lys-34 is required for alleviation. This is Elongation factor P from Nitrosococcus oceani (strain ATCC 19707 / BCRC 17464 / JCM 30415 / NCIMB 11848 / C-107).